Consider the following 490-residue polypeptide: ATP synthase subunit beta, chloroplastic (490 aa).

170-177 contacts ATP; the sequence is GGAGVGKT.

Belongs to the ATPase alpha/beta chains family. As to quaternary structure, F-type ATPases have 2 components, CF(1) - the catalytic core - and CF(0) - the membrane proton channel. CF(1) has five subunits: alpha(3), beta(3), gamma(1), delta(1), epsilon(1). CF(0) has four main subunits: a(1), b(1), b'(1) and c(9-12).

The protein localises to the plastid. It is found in the chloroplast thylakoid membrane. It carries out the reaction ATP + H2O + 4 H(+)(in) = ADP + phosphate + 5 H(+)(out). Functionally, produces ATP from ADP in the presence of a proton gradient across the membrane. The catalytic sites are hosted primarily by the beta subunits. The protein is ATP synthase subunit beta, chloroplastic of Ipomoea wrightii (Wright's morning glory).